The sequence spans 688 residues: ATP-dependent zinc metalloprotease FTSH 6, chloroplastic (688 aa).

The transit peptide at 1–75 (MKMASSSSAL…GFTSALGTVL (75 aa)) directs the protein to the chloroplast. A compositionally biased stretch (polar residues) spans 25–36 (QQFQKPASLSKS). Residues 25–44 (QQFQKPASLSKSSHTHKPSL) are disordered. A thylakoid-targeting transit peptide spans 76–83 (AHPAKAEP). Over 84–168 (EAPIEATSNR…AHPMNVNWGA (85 aa)) the chain is Lumenal, thylakoid. Residues 169–189 (FLLNFLGNLGFPLILLVSLLL) traverse the membrane as a helical segment. At 190–688 (TSSSRRNPAG…RIRINDLISV (499 aa)) the chain is on the stromal side. Residue 264–271 (GPPGTGKT) participates in ATP binding. Position 485 (H485) interacts with Zn(2+). Residue E486 is part of the active site. Zn(2+) contacts are provided by H489 and D563.

The protein in the N-terminal section; belongs to the AAA ATPase family. In the C-terminal section; belongs to the peptidase M41 family. It depends on Zn(2+) as a cofactor.

The protein resides in the plastid. The protein localises to the chloroplast thylakoid membrane. Functionally, probable ATP-dependent zinc metallopeptidase. Involved in the degradation of the light-harvesting complex of photosystem II (LHC II) during senescence or high light acclimation. The sequence is that of ATP-dependent zinc metalloprotease FTSH 6, chloroplastic (FTSH6) from Arabidopsis thaliana (Mouse-ear cress).